Here is a 459-residue protein sequence, read N- to C-terminus: MIFYNSLSGKKEEFKPIEPNKIKMYVCGITVYDDCHIGHARTNIAFDVINRYFKYRGFDVTFVRNITDIDDKIIKRANENGETTDKLVERTIKSMHDAFDKLNILRPTKEPRATQTIPEMIAMIETLVEKGFAYQGTNGDVFYRVAKFADYGKLSKQNLEALEQGSRVDVVEEKENPMDFVLWKMAKEGEPAWDSPWGAGRPGWHIECSAMSKKLLGDTFDIHAGGSDLRFPHHENEIAQSEACNECTFANYWLHSGMVKVNAEKMSKSLNNFFTINEVIEEYHPEVIRYFLASTVYRSEINYSKENLDNARASVERLFNALRDIEPVEVNLPDDASEYEEKFIKAMDNDFNTPEALAVLFSLAKEINTLKTVNKYKASGYAFLLRKLCDVLGILFTDIEEYFKQGDGIDVSEIEKLIAERTQAKKDKNYARADEIRNDLQNQGIILEDSATGTTWKKG.

Cys27 lines the Zn(2+) pocket. A 'HIGH' region motif is present at residues 29–39; the sequence is ITVYDDCHIGH. Cys208, His233, and Glu237 together coordinate Zn(2+). A 'KMSKS' region motif is present at residues 265-269; sequence KMSKS. Lys268 contributes to the ATP binding site.

It belongs to the class-I aminoacyl-tRNA synthetase family. In terms of assembly, monomer. It depends on Zn(2+) as a cofactor.

Its subcellular location is the cytoplasm. The catalysed reaction is tRNA(Cys) + L-cysteine + ATP = L-cysteinyl-tRNA(Cys) + AMP + diphosphate. The protein is Cysteine--tRNA ligase of Francisella philomiragia subsp. philomiragia (strain ATCC 25017 / CCUG 19701 / FSC 153 / O#319-036).